Reading from the N-terminus, the 569-residue chain is 5'-AMP-activated protein kinase subunit gamma-2 (569 aa).

A disordered region spans residues 1–222 (MGSAVMDTKK…TRPPLASPTH (222 aa)). 8 positions are modified to phosphoserine: S65, S71, S73, S90, S138, S143, S161, and S162. Residues 156 to 167 (TSGLSSSPSTPT) show a composition bias toward low complexity. A Phosphothreonine modification is found at T165. Residues 179-189 (SYKHEPERLEN) show a composition bias toward basic and acidic residues. Positions 192-212 (YASSSPPDTGQRFCPSSFQSP) are enriched in polar residues. S196 is subject to Phosphoserine. CBS domains lie at 275-335 (PTSS…KSPM), 357-415 (TFKP…MSDM), and 430-492 (IGTY…NLDI). Residues R302, 317–322 (MLTITD), V362, 383–384 (HR), and K402 each bind ADP. Residues R302, 317-322 (MLTITD), V362, H383, 383-384 (HR), K402, T432, A437, 458-459 (SA), 474-477 (SKFD), R501, H530, 530-531 (HR), and 546-549 (SLSD) each bind AMP. ATP contacts are provided by residues R302, 317–322 (MLTITD), V362, 383–384 (HR), R384, and K402. Residues 370 to 391 (LFDAVYSLIKNKIHRLPVIDPI) carry the AMPK pseudosubstrate motif. Residues 474–477 (SKFD), R501, and 530–531 (HR) each bind ADP. ATP-binding positions include 474 to 477 (SKFD), R501, and 530 to 531 (HR). Positions 504–562 (YFEGVVKCNKLEILETIVDRIVRAEVHRLVVVNEADSIVGIISLSDILQALILTPAGAK) constitute a CBS 4 domain.

It belongs to the 5'-AMP-activated protein kinase gamma subunit family. AMPK is a heterotrimer of an alpha catalytic subunit (PRKAA1 or PRKAA2), a beta (PRKAB1 or PRKAB2) and a gamma non-catalytic subunits (PRKAG1, PRKAG2 or PRKAG3). Interacts with FNIP1 and FNIP2. Phosphorylated by ULK1; leading to negatively regulate AMPK activity and suggesting the existence of a regulatory feedback loop between ULK1 and AMPK. Post-translationally, glycosylated; O-GlcNAcylated by OGT, promoting the AMP-activated protein kinase (AMPK) activity. Isoform B is ubiquitously expressed except in liver and thymus. The highest level is detected in heart with abundant expression in placenta and testis.

Functionally, AMP/ATP-binding subunit of AMP-activated protein kinase (AMPK), an energy sensor protein kinase that plays a key role in regulating cellular energy metabolism. In response to reduction of intracellular ATP levels, AMPK activates energy-producing pathways and inhibits energy-consuming processes: inhibits protein, carbohydrate and lipid biosynthesis, as well as cell growth and proliferation. AMPK acts via direct phosphorylation of metabolic enzymes, and by longer-term effects via phosphorylation of transcription regulators. Also acts as a regulator of cellular polarity by remodeling the actin cytoskeleton; probably by indirectly activating myosin. Gamma non-catalytic subunit mediates binding to AMP, ADP and ATP, leading to activate or inhibit AMPK: AMP-binding results in allosteric activation of alpha catalytic subunit (PRKAA1 or PRKAA2) both by inducing phosphorylation and preventing dephosphorylation of catalytic subunits. ADP also stimulates phosphorylation, without stimulating already phosphorylated catalytic subunit. ATP promotes dephosphorylation of catalytic subunit, rendering the AMPK enzyme inactive. This chain is 5'-AMP-activated protein kinase subunit gamma-2 (PRKAG2), found in Homo sapiens (Human).